Here is a 341-residue protein sequence, read N- to C-terminus: Tetraacyldisaccharide 4'-kinase (341 aa).

Threonine 54–threonine 61 is a binding site for ATP.

Belongs to the LpxK family.

It catalyses the reaction a lipid A disaccharide + ATP = a lipid IVA + ADP + H(+). Its pathway is glycolipid biosynthesis; lipid IV(A) biosynthesis; lipid IV(A) from (3R)-3-hydroxytetradecanoyl-[acyl-carrier-protein] and UDP-N-acetyl-alpha-D-glucosamine: step 6/6. In terms of biological role, transfers the gamma-phosphate of ATP to the 4'-position of a tetraacyldisaccharide 1-phosphate intermediate (termed DS-1-P) to form tetraacyldisaccharide 1,4'-bis-phosphate (lipid IVA). This chain is Tetraacyldisaccharide 4'-kinase, found in Brucella suis (strain ATCC 23445 / NCTC 10510).